A 440-amino-acid polypeptide reads, in one-letter code: 5-hydroxytryptamine receptor 6 (440 aa).

Residues 1–27 (MVPEPGPSANSTPAWGAGPPSAPGGSG) are Extracellular-facing. Residues 28-52 (WVAAALCVVIALTAAANSLLIALIC) form a helical membrane-spanning segment. Topologically, residues 53–62 (TQPALRNTSN) are cytoplasmic. A helical membrane pass occupies residues 63 to 88 (FFLVSLFTSDLMVGLVVMPPAMLNAL). The Extracellular segment spans residues 89-96 (YGRWVLAR). A helical membrane pass occupies residues 97–122 (GLCLLWTAFDVMCCSASILNLCLISL). C99 and C180 are disulfide-bonded. D106 is a serotonin binding site. At 123 to 142 (DRYLLILSPLRYKLRMTPPR) the chain is on the cytoplasmic side. Residues 143–167 (ALALVLGAWSLAALASFLPLLLGWH) form a helical membrane-spanning segment. Residues 168 to 185 (ELGHARPPVPGQCRLLAS) lie on the Extracellular side of the membrane. Residues 186 to 209 (LPFVLVASGLTFFLPSGAICFTYC) form a helical membrane-spanning segment. The Cytoplasmic segment spans residues 210-266 (RILLAARKQAVQVASLTTGMASQASETLQVPRTPRPGVESADSRRLATKHSRKALKA). The helical transmembrane segment at 267–293 (SLTLGILLGMFFVTWLPFFVANIVQAV) threads the bilayer. N288 contributes to the serotonin binding site. The Extracellular segment spans residues 294–299 (CDCISP). Residues 300-323 (GLFDVLTWLGYCNSTMNPIIYPLF) traverse the membrane as a helical segment. Topologically, residues 324 to 440 (MRDFKRALGR…RPHPLGIPTN (117 aa)) are cytoplasmic. The interval 346 to 392 (ASLASPSLRTSHSGPRPGLSLQQVLPLPLPPDSDSDSDAGSGGSSGL) is disordered. Polar residues predominate over residues 347 to 358 (SLASPSLRTSHS). Residues 362–371 (PGLSLQQVLP) are compositionally biased toward low complexity.

The protein belongs to the G-protein coupled receptor 1 family. Interacts with MTOR, RPTOR and NF1. Interacts with CDK5.

It is found in the cell membrane. Functionally, G-protein coupled receptor for 5-hydroxytryptamine (serotonin), a biogenic hormone that functions as a neurotransmitter, a hormone and a mitogen. Also has a high affinity for tricyclic psychotropic drugs. Ligand binding causes a conformation change that triggers signaling via guanine nucleotide-binding proteins (G proteins) and modulates the activity of downstream effectors. HTR6 is coupled to G(s) G alpha proteins and mediates activation of adenylate cyclase activity. Controls pyramidal neurons migration during corticogenesis, through the regulation of CDK5 activity. Is an activator of mTOR signaling. This is 5-hydroxytryptamine receptor 6 (HTR6) from Pan troglodytes (Chimpanzee).